A 962-amino-acid polypeptide reads, in one-letter code: RNA-binding protein 15 (962 aa).

Basic and acidic residues-rich tracts occupy residues 1–10 (MRSAGREPLP), 34–52 (LRRDDLRRPSTMKGKERSP), and 59–72 (RGGEDSSSRGERSK). Residues 1-167 (MRSAGREPLP…SAPGGGDGVE (167 aa)) are disordered. Residues 82-94 (GSSSGKTDSGGSR) are compositionally biased toward low complexity. Residues 97–112 (LHLDKSSSRGGSREYE) are compositionally biased toward basic and acidic residues. A Phosphoserine modification is found at S108. Positions 118-129 (SSSRLHSYSSPS) are enriched in low complexity. Gly residues predominate over residues 134-149 (SGGGESRSSSRGGGGE). Positions 150-159 (SRSSGAASSA) are enriched in low complexity. Residues 169 to 251 (KTLKISELGS…RPLKIEAVYV (83 aa)) enclose the RRM 1 domain. A phosphoserine mark is found at S178, S207, and S209. A Glycyl lysine isopeptide (Lys-Gly) (interchain with G-Cter in SUMO2) cross-link involves residue K245. S252, S256, and S258 each carry phosphoserine. Residues 257–297 (RSPLDKDAYAPSSSVVGTSVGSHRHAPGGGGGQRSLSPGGA) are disordered. At Y265 the chain carries Phosphotyrosine. The segment covering 268–277 (SSSVVGTSVG) has biased composition (low complexity). 3 positions are modified to phosphoserine: S291, S293, and S364. 2 consecutive RRM domains span residues 373–450 (RTLF…YGKA) and 454–528 (TRLW…FADT). Residues K405, K419, and K444 each participate in a glycyl lysine isopeptide (Lys-Gly) (interchain with G-Cter in SUMO2) cross-link. K449 carries the post-translational modification N6-acetyllysine. Basic and acidic residues-rich tracts occupy residues 553-580 (GHRAPDPLRSARDRTPPLLYRDRDRDLY) and 612-661 (SLDR…SERP). The tract at residues 553-779 (GHRAPDPLRS…KQDGGTAPVA (227 aa)) is disordered. Position 567 is a phosphothreonine (T567). R577 is modified (asymmetric dimethylarginine; alternate; by PRMT1). R577 is subject to Omega-N-methylarginine; alternate; by PRMT1. 5 positions are modified to phosphoserine: S621, S655, S670, S674, and S701. 3 stretches are compositionally biased toward basic and acidic residues: residues 673 to 692 (RSPELSSNRDRYNSDNDRSS), 701 to 729 (SPVRDRRGSLEKSQSDKRDRKNSASAERD), and 742 to 751 (NPLKKEDRSD). Residue K745 forms a Glycyl lysine isopeptide (Lys-Gly) (interchain with G-Cter in SUMO2) linkage. The span at 754–771 (APSASTSSSKQKPPSQKQ) shows a compositional bias: low complexity. 2 positions are modified to phosphoserine: S768 and S782. Residues 778–957 (VAASSPKLCL…YLVMIIVRAK (180 aa)) form the SPOC domain. The disordered stretch occupies residues 866–885 (GSSDSRSSSSSATSDTAAST). A compositionally biased stretch (low complexity) spans 867–885 (SSDSRSSSSSATSDTAAST). S936 is subject to Phosphoserine.

It belongs to the RRM Spen family. In terms of assembly, component of the WMM complex, a N6-methyltransferase complex composed of a catalytic subcomplex, named MAC, and of an associated subcomplex, named MACOM. The MAC subcomplex is composed of METTL3 and METTL14. The MACOM subcomplex is composed of WTAP, ZC3H13, CBLL1/HAKAI, VIRMA, and, in some cases of RBM15 (RBM15 or RBM15B). Also a component of a MACOM-like complex, named WTAP complex, composed of WTAP, ZC3H13, CBLL1, VIRMA, RBM15, BCLAF1 and THRAP3. Interacts with RBPJ. Interacts (via SPOC domain) with SETD1B. Interacts with NXF1, the interaction is required to promote mRNA export. Interacts with SF3B1. Methylated at Arg-577 by PRMT1, leading to promote ubiquitination by CNOT4 and subsequent degradation by the proteasome. In terms of processing, ubiquitinated by CNOT4 following methylation at Arg-577 by PRMT1.

It localises to the nucleus speckle. The protein resides in the nucleus. It is found in the nucleoplasm. Its subcellular location is the nucleus envelope. The protein localises to the nucleus membrane. Its function is as follows. RNA-binding protein that acts as a key regulator of N6-methyladenosine (m6A) methylation of RNAs, thereby regulating different processes, such as hematopoietic cell homeostasis, alternative splicing of mRNAs and X chromosome inactivation mediated by Xist RNA. Associated component of the WMM complex, a complex that mediates N6-methyladenosine (m6A) methylation of RNAs, a modification that plays a role in the efficiency of mRNA splicing and RNA processing. Plays a key role in m6A methylation, possibly by binding target RNAs and recruiting the WMM complex. Involved in random X inactivation mediated by Xist RNA: acts by binding Xist RNA and recruiting the WMM complex, which mediates m6A methylation, leading to target YTHDC1 reader on Xist RNA and promoting transcription repression activity of Xist. Required for the development of multiple tissues, such as the maintenance of the homeostasis of long-term hematopoietic stem cells and for megakaryocyte (MK) and B-cell differentiation. Regulates megakaryocyte differentiation by regulating alternative splicing of genes important for megakaryocyte differentiation; probably regulates alternative splicing via m6A regulation. Required for placental vascular branching morphogenesis and embryonic development of the heart and spleen. Acts as a regulator of thrombopoietin response in hematopoietic stem cells by regulating alternative splicing of MPL. May also function as an mRNA export factor, stimulating export and expression of RTE-containing mRNAs which are present in many retrotransposons that require to be exported prior to splicing. High affinity binding of pre-mRNA to RBM15 may allow targeting of the mRNP to the export helicase DBP5 in a manner that is independent of splicing-mediated NXF1 deposition, resulting in export prior to splicing. May be implicated in HOX gene regulation. The sequence is that of RNA-binding protein 15 from Mus musculus (Mouse).